A 125-amino-acid polypeptide reads, in one-letter code: Succinate dehydrogenase cytochrome b556 subunit (125 aa).

Over 1 to 22 (MNAKRPVNLDLTKFHFPPMAIL) the chain is Cytoplasmic. A helical membrane pass occupies residues 23-48 (SIGHRISGFVLFLCMPLMFYLLHRAT). Topologically, residues 49–65 (ASAESFYHLHQLLLHNG) are periplasmic. The chain crosses the membrane as a helical span at residues 66 to 86 (WIKLAVWIMLSATLFHLFAGI). His-81 contacts heme. The Cytoplasmic portion of the chain corresponds to 87-104 (RHLAMDLGFWESVPEGRI). A helical transmembrane segment spans residues 105–125 (SAYTVFVVSFIAIVLAGVWIW).

This sequence belongs to the cytochrome b560 family. In terms of assembly, part of an enzyme complex containing four subunits: a flavoprotein, an iron-sulfur protein, plus two membrane-anchoring proteins, SdhC and SdhD. The complex can form homotrimers. The cofactor is heme.

The protein localises to the cell inner membrane. It functions in the pathway carbohydrate metabolism; tricarboxylic acid cycle. Its function is as follows. Membrane-anchoring subunit of succinate dehydrogenase (SDH). The polypeptide is Succinate dehydrogenase cytochrome b556 subunit (sdhC) (Coxiella burnetii (strain RSA 493 / Nine Mile phase I)).